The following is a 226-amino-acid chain: SURF1-like protein (226 aa).

2 consecutive transmembrane segments (helical) span residues Thr3–Ser23 and Leu199–Tyr219.

The protein belongs to the SURF1 family.

It is found in the cell membrane. The chain is SURF1-like protein from Rickettsia felis (strain ATCC VR-1525 / URRWXCal2) (Rickettsia azadi).